We begin with the raw amino-acid sequence, 703 residues long: Subtilisin-like protease SBT4.7 (703 aa).

The first 19 residues, 1–19, serve as a signal peptide directing secretion; sequence MAKRDYFCFVVLFLSSVSA. Residues 20-107 constitute a propeptide, activation peptide; that stretch reads VIDDPQNKQV…VFPNINYKLQ (88 aa). Residues 29-106 enclose the Inhibitor I9 domain; the sequence is VYVVYMGSLP…SVFPNINYKL (78 aa). Positions 111–556 constitute a Peptidase S8 domain; that stretch reads SWDFLGLKEG…AGHVDQIAAI (446 aa). Asp139 functions as the Charge relay system in the catalytic mechanism. An N-linked (GlcNAc...) asparagine glycan is attached at Asn170. His194 acts as the Charge relay system in catalysis. Asn217, Asn360, Asn416, and Asn433 each carry an N-linked (GlcNAc...) asparagine glycan. The region spanning 350–411 is the PA domain; that stretch reads KYPLVYGDNF…LLPPDDFDSL (62 aa). Catalysis depends on Ser495, which acts as the Charge relay system. N-linked (GlcNAc...) asparagine glycans are attached at residues Asn577, Asn615, and Asn633.

It belongs to the peptidase S8 family. The C-terminal propeptide is autocleaved.

It is found in the secreted. In Arabidopsis thaliana (Mouse-ear cress), this protein is Subtilisin-like protease SBT4.7.